Here is a 112-residue protein sequence, read N- to C-terminus: T cell receptor alpha variable 7 (112 aa).

The first 21 residues, 1–21 (MEKMRRPVLIIFCLCLGWANG), serve as a signal peptide directing secretion. The 91-residue stretch at 22 to 112 (ENQVEHSPHF…DSATYFCAVD (91 aa)) folds into the Ig-like domain. An intrachain disulfide couples Cys-44 to Cys-109. N-linked (GlcNAc...) asparagine glycans are attached at residues Asn-84 and Asn-90.

In terms of assembly, alpha-beta TR is a heterodimer composed of an alpha and beta chain; disulfide-linked. The alpha-beta TR is associated with the transmembrane signaling CD3 coreceptor proteins to form the TR-CD3 (TcR or TCR). The assembly of alpha-beta TR heterodimers with CD3 occurs in the endoplasmic reticulum where a single alpha-beta TR heterodimer associates with one CD3D-CD3E heterodimer, one CD3G-CD3E heterodimer and one CD247 homodimer forming a stable octameric structure. CD3D-CD3E and CD3G-CD3E heterodimers preferentially associate with TR alpha and TR beta chains, respectively. The association of the CD247 homodimer is the last step of TcR assembly in the endoplasmic reticulum and is required for transport to the cell surface.

The protein localises to the cell membrane. Functionally, v region of the variable domain of T cell receptor (TR) alpha chain that participates in the antigen recognition. Alpha-beta T cell receptors are antigen specific receptors which are essential to the immune response and are present on the cell surface of T lymphocytes. Recognize peptide-major histocompatibility (MH) (pMH) complexes that are displayed by antigen presenting cells (APC), a prerequisite for efficient T cell adaptive immunity against pathogens. Binding of alpha-beta TR to pMH complex initiates TR-CD3 clustering on the cell surface and intracellular activation of LCK that phosphorylates the ITAM motifs of CD3G, CD3D, CD3E and CD247 enabling the recruitment of ZAP70. In turn ZAP70 phosphorylates LAT, which recruits numerous signaling molecules to form the LAT signalosome. The LAT signalosome propagates signal branching to three major signaling pathways, the calcium, the mitogen-activated protein kinase (MAPK) kinase and the nuclear factor NF-kappa-B (NF-kB) pathways, leading to the mobilization of transcription factors that are critical for gene expression and essential for T cell growth and differentiation. The T cell repertoire is generated in the thymus, by V-(D)-J rearrangement. This repertoire is then shaped by intrathymic selection events to generate a peripheral T cell pool of self-MH restricted, non-autoaggressive T cells. Post-thymic interaction of alpha-beta TR with the pMH complexes shapes TR structural and functional avidity. In Homo sapiens (Human), this protein is T cell receptor alpha variable 7.